A 113-amino-acid polypeptide reads, in one-letter code: Cytochrome c oxidase subunit 7A2-like, mitochondrial (113 aa).

Residues 1–54 (MYYKFSSFTQKLAGAWASEAYTPQGLKPVSTEAPPIIFATPTKLTSSVTAYDYS) constitute a mitochondrion transit peptide. Residue Lys-68 is modified to N6-acetyllysine. Residues 81 to 106 (PDQMLYRTTMALTLGGTIYCLIALYM) form a helical membrane-spanning segment.

This sequence belongs to the cytochrome c oxidase VIIa family. Interacts with the mitochondrial respiratory complexes III (CIII) and IV (CIV), promoting their association.

Its subcellular location is the mitochondrion inner membrane. Its pathway is energy metabolism; oxidative phosphorylation. Assembly factor that mediates the formation of some mitochondrial respiratory supercomplexes (respirasomes), thereby promoting oxidative phosphorylation and energy metabolism. Acts as a molecular adapter that associates with both mitochondrial respiratory complexes III (CIII) and IV (CIV), promoting their association. Mediates the formation of various mitochondrial respiratory supercomplexes, such as MCIII(2)IV(2), composed of two CIII and two CIV, and the CS-respirasome (MCI(1)III(2)IV(2)), composed of one CI, two CIII and two CIV. Not involved in the formation of the canonical respirasome (MCI(1)III(2)IV(1)), composed of one CI, two CIII and one CIV. The formation of different respirasomes is important for cell adaptation to oxygen conditions and prevent metabolic exhaustion: supercomplexes mediated by COX7A2L/SCAF1 are required to maintain oxidative phosphorylation upon low oxygen conditions and promote metabolic rewiring toward glycolysis. This chain is Cytochrome c oxidase subunit 7A2-like, mitochondrial, found in Mus musculus (Mouse).